The chain runs to 324 residues: Ribose-phosphate pyrophosphokinase 1 (324 aa).

ATP contacts are provided by residues 39–41 (DGE) and 98–99 (RQ). The Mg(2+) site is built by histidine 132 and aspartate 174. Lysine 197 is a catalytic residue. D-ribose 5-phosphate is bound by residues arginine 199, aspartate 223, and 227-231 (DTAGT).

The protein belongs to the ribose-phosphate pyrophosphokinase family. Class I subfamily. Homohexamer. The cofactor is Mg(2+).

The protein localises to the cytoplasm. The catalysed reaction is D-ribose 5-phosphate + ATP = 5-phospho-alpha-D-ribose 1-diphosphate + AMP + H(+). The protein operates within metabolic intermediate biosynthesis; 5-phospho-alpha-D-ribose 1-diphosphate biosynthesis; 5-phospho-alpha-D-ribose 1-diphosphate from D-ribose 5-phosphate (route I): step 1/1. In terms of biological role, involved in the biosynthesis of the central metabolite phospho-alpha-D-ribosyl-1-pyrophosphate (PRPP) via the transfer of pyrophosphoryl group from ATP to 1-hydroxyl of ribose-5-phosphate (Rib-5-P). This Lactococcus lactis subsp. lactis (strain IL1403) (Streptococcus lactis) protein is Ribose-phosphate pyrophosphokinase 1.